The following is a 1571-amino-acid chain: Guanine nucleotide-releasing factor 2 (1571 aa).

3 disordered regions span residues 28-85 (LPPH…RDTN), 202-271 (INSG…KLAR), and 287-316 (MRTT…PTTE). The span at 55 to 73 (QLHHHHHQQHHHNHHRLWK) shows a compositional bias: basic residues. Residues 74-83 (TQRQSWSPRD) show a composition bias toward polar residues. The segment covering 230 to 248 (TPGGSSRVGGAGAGGGGGV) has biased composition (gly residues). Residues 287-297 (MRTTNNTLGRS) show a composition bias toward polar residues. The span at 298-309 (HSPHSPRTKHGT) shows a compositional bias: basic residues. A phosphoserine mark is found at Ser-496 and Ser-523. Disordered regions lie at residues 513 to 580 (HNVN…QASP), 614 to 646 (RSRS…HQHL), 695 to 719 (GEGV…ESGF), 728 to 747 (STQT…SSNS), 776 to 868 (QRHI…SEVA), and 879 to 898 (LNHH…HSKH). Thr-524 is modified (phosphothreonine). A Phosphoserine modification is found at Ser-526. The span at 532 to 550 (SPPPKPPLPNRASNPPPLP) shows a compositional bias: pro residues. The SH3-binding signature appears at 546-556 (PPPLPPKRRSQ). The segment covering 556–579 (QPSASAGTVGVGCSSSTSTSNQAS) has biased composition (low complexity). A Phosphoserine modification is found at Ser-615. Over residues 620–631 (ENSQCSFDSALN) the composition is skewed to polar residues. Positions 697–707 (GVAAAASGDGE) are enriched in low complexity. Residues 708-718 (TNSNRHSNESG) are compositionally biased toward polar residues. Low complexity-rich tracts occupy residues 735-747 (SVQS…SSNS) and 780-824 (SSSS…DLAP). The SH3-binding motif lies at 820–831 (ADLAPALPPKSI). The span at 851-866 (VQSSSGWASHRSSQSE) shows a compositional bias: polar residues. 2 consecutive short sequence motifs (SH3-binding) follow at residues 924 to 935 (DQEPPPLPIKKK) and 986 to 997 (LEMPPALPPKNY). Residues 1013–1038 (PVIVTTPPPSPKPTLGENGSTGRPDS) form a disordered region. The N-terminal Ras-GEF domain occupies 1170–1292 (DGPEVKGGYI…LRNKFVEKVT (123 aa)). In terms of domain architecture, Ras-GEF spans 1339–1564 (KSLEIAEQMT…WQISEKIKPR (226 aa)).

As to expression, ubiquitous.

Guanine nucleotide-releasing protein that binds to SH3 domain of Crk. Transduces signals from Crk to activate RAS. Also involved in MAPK activation. The sequence is that of Guanine nucleotide-releasing factor 2 (C3G) from Drosophila melanogaster (Fruit fly).